Here is a 476-residue protein sequence, read N- to C-terminus: Glutamyl-tRNA(Gln) amidotransferase subunit A (476 aa).

Active-site charge relay system residues include Lys70 and Ser145. Ser169 (acyl-ester intermediate) is an active-site residue.

Belongs to the amidase family. GatA subfamily. Heterotrimer of A, B and C subunits.

The catalysed reaction is L-glutamyl-tRNA(Gln) + L-glutamine + ATP + H2O = L-glutaminyl-tRNA(Gln) + L-glutamate + ADP + phosphate + H(+). Its function is as follows. Allows the formation of correctly charged Gln-tRNA(Gln) through the transamidation of misacylated Glu-tRNA(Gln) in organisms which lack glutaminyl-tRNA synthetase. The reaction takes place in the presence of glutamine and ATP through an activated gamma-phospho-Glu-tRNA(Gln). The polypeptide is Glutamyl-tRNA(Gln) amidotransferase subunit A (Methanosarcina acetivorans (strain ATCC 35395 / DSM 2834 / JCM 12185 / C2A)).